Here is a 79-residue protein sequence, read N- to C-terminus: Large ribosomal subunit protein uL22 (79 aa).

This sequence belongs to the universal ribosomal protein uL22 family. In terms of assembly, part of the 50S ribosomal subunit.

Functionally, this protein binds specifically to 23S rRNA; its binding is stimulated by other ribosomal proteins, e.g. L4, L17, and L20. It is important during the early stages of 50S assembly. It makes multiple contacts with different domains of the 23S rRNA in the assembled 50S subunit and ribosome. In terms of biological role, the globular domain of the protein is located near the polypeptide exit tunnel on the outside of the subunit, while an extended beta-hairpin is found that lines the wall of the exit tunnel in the center of the 70S ribosome. The sequence is that of Large ribosomal subunit protein uL22 (rplV) from Clover proliferation phytoplasma.